The sequence spans 501 residues: MTEQVQLDENKLIAERRGKLDHIRQACKANGHPNDFRRDSLAGDLQAEFGEKTKEELEELNHVVAIAGRVMAKRGPFLLIQEVSGKIQAYAAKEVQKELKDKYQGLDIGDIIGVKGALHKSGKGDLYVNMEEYVLLTKALRPLPEKFHGLTDQEMRYRQRYVDLIVNDDSRHAFIVRSKVVAAIRNFMVDKGFMEVETPMMHVIPGGASARPFVTHHNALDVDMYLRIAPELYLKRLVVGGFERVFEINRNFRNEGLSPRHNPEFTMMEFYMAYADYNDLMDLTEEMLSTVATSVLGSDKMPYGEHTVDFGGKYARMSMLDAIKQYNPDHAEIQALTYEGVKDRDLMVSIAKSVHVDVESFWTCGQLLEEIFGETAEPKLMQPTFITEYPADISPLARRNDDNDFITDRFEFFIGGREVANGFSELNDAQDQDERFKAQVNAKESGDDEAMYYDADYITALEHGLPPTAGQGIGIDRLVMLLTNTHTIRDVILFPSMRPQA.

Positions 411 and 418 each coordinate Mg(2+).

It belongs to the class-II aminoacyl-tRNA synthetase family. Homodimer. Mg(2+) serves as cofactor.

It is found in the cytoplasm. It catalyses the reaction tRNA(Lys) + L-lysine + ATP = L-lysyl-tRNA(Lys) + AMP + diphosphate. The protein is Lysine--tRNA ligase of Aliivibrio fischeri (strain ATCC 700601 / ES114) (Vibrio fischeri).